Here is a 478-residue protein sequence, read N- to C-terminus: Cytochrome c-552 (478 aa).

The N-terminal stretch at 1-26 is a signal peptide; that stretch reads MARKTLRARRFFSLIFPFFFITSVYA. Position 94 (histidine 94) interacts with heme c. Cysteine 122, cysteine 125, and lysine 126 together coordinate heme. The heme c site is built by cysteine 160, cysteine 163, histidine 164, cysteine 209, cysteine 212, and histidine 213. Glutamate 215, tyrosine 216, lysine 261, and glutamine 263 together coordinate Ca(2+). Tyrosine 216 lines the substrate pocket. Position 264 (histidine 264) interacts with substrate. Positions 275, 282, 285, 286, 301, 314, 317, 318, and 393 each coordinate heme c.

Belongs to the cytochrome c-552 family. Ca(2+) serves as cofactor. Heme c is required as a cofactor.

The protein localises to the periplasm. The catalysed reaction is 6 Fe(III)-[cytochrome c] + NH4(+) + 2 H2O = 6 Fe(II)-[cytochrome c] + nitrite + 8 H(+). It functions in the pathway nitrogen metabolism; nitrate reduction (assimilation). In terms of biological role, catalyzes the reduction of nitrite to ammonia, consuming six electrons in the process. The sequence is that of Cytochrome c-552 from Salmonella agona (strain SL483).